Here is a 323-residue protein sequence, read N- to C-terminus: Prostaglandin F synthase 2 (323 aa).

NADP(+) is bound by residues 20 to 24 (GFGTY) and D50. The Proton donor role is filled by Y55. H117 contributes to the substrate binding site. Residues 166–167 (SN), Q190, 216–221 (YAALGA), and 270–280 (KSFNKKRIKEN) each bind NADP(+).

The protein belongs to the aldo/keto reductase family. In terms of assembly, monomer.

It is found in the cytoplasm. The catalysed reaction is prostaglandin F2alpha + NADP(+) = prostaglandin D2 + NADPH + H(+). It participates in lipid metabolism; prostaglandin biosynthesis. Functionally, catalyzes the reduction of PGD(2) and PGH(2) to PGF(2 alpha) and a stereoisomer, respectively. It has a broad substrate specificity and also reduces other carbonyl compounds. The protein is Prostaglandin F synthase 2 of Bos taurus (Bovine).